Consider the following 114-residue polypeptide: Putative membrane protein insertion efficiency factor (114 aa).

The protein belongs to the UPF0161 family.

The protein resides in the cell inner membrane. Could be involved in insertion of integral membrane proteins into the membrane. This Wolinella succinogenes (strain ATCC 29543 / DSM 1740 / CCUG 13145 / JCM 31913 / LMG 7466 / NCTC 11488 / FDC 602W) (Vibrio succinogenes) protein is Putative membrane protein insertion efficiency factor.